A 698-amino-acid polypeptide reads, in one-letter code: Adhesion G protein-coupled receptor F4 (698 aa).

The N-terminal stretch at 1–19 (MKPWIAMVCCLVFFLTTEC) is a signal peptide. Over 20–409 (SHSKPKTHRK…VKNTILNHIT (390 aa)) the chain is Extracellular. Residues Asn61, Asn168, Asn213, Asn268, Asn290, Asn344, and Asn375 are each glycosylated (N-linked (GlcNAc...) asparagine). The GAIN-B domain occupies 250 to 401 (RISHSSSEHS…SILMSSKPVK (152 aa)). Disulfide bonds link Cys353–Cys380 and Cys368–Cys382. The GPS stretch occupies residues 353–401 (CVSWDPATGQWDESPCTVMSDINSTVKCRCRHTKAVTSFSILMSSKPVK). A helical membrane pass occupies residues 410-430 (FIGLSISIFSLVLCLVIEAIV). Residues 431–444 (WSRVVVTEISYMRH) lie on the Cytoplasmic side of the membrane. Residues 445-465 (VCIVNIAVSLLTANVWFIIGS) traverse the membrane as a helical segment. An N-linked (GlcNAc...) asparagine glycan is attached at Asn466. Residues 466–486 (NFSANVQEDHKWCVAVTFLCH) are Extracellular-facing. The chain crosses the membrane as a helical span at residues 487–507 (FFFLSLFFWMLFKALLIVYGI). The Cytoplasmic segment spans residues 508 to 518 (LVVFRRMMKSR). The helical transmembrane segment at 519 to 539 (MMAIGFAIGYGCPLVIAVITV) threads the bilayer. Topologically, residues 540–566 (TVTEPGEGYTRKDACWLNWNQTKALFA) are extracellular. N-linked (GlcNAc...) asparagine glycosylation is present at Asn559. A helical transmembrane segment spans residues 567 to 587 (FAIPALAIVAVNLLVVLAVAI). Topologically, residues 588 to 611 (NTQRPLIGSSKSQDMAIVFRISKN) are cytoplasmic. Residues 612–632 (VAILTPLLGLTWGFGLTTLLE) form a helical membrane-spanning segment. The Extracellular segment spans residues 633–635 (GVH). The chain crosses the membrane as a helical span at residues 636–656 (LVFHIIFALLNAFQGFFILLF). The Cytoplasmic segment spans residues 657 to 698 (GTIMDHKIRDALRMRVSSLKGKSRAAEKVSLSPANGSRILNR).

This sequence belongs to the G-protein coupled receptor 2 family. Adhesion G-protein coupled receptor (ADGR) subfamily. As to expression, expressed in squamous epithelia.

It is found in the membrane. Its function is as follows. Orphan receptor. The protein is Adhesion G protein-coupled receptor F4 (Adgrf4) of Mus musculus (Mouse).